The primary structure comprises 527 residues: Mitochondrial substrate carrier family protein V (527 aa).

A compositionally biased stretch (basic and acidic residues) spans 1-14; that stretch reads MNSSDFKKSFKEST. The tract at residues 1-29 is disordered; it reads MNSSDFKKSFKESTENNSNTYRPSKTLNT. At 1–132 the chain is on the mitochondrial intermembrane side; sequence MNSSDFKKSF…VSKKSISKEN (132 aa). Over residues 15–29 the composition is skewed to polar residues; the sequence is ENNSNTYRPSKTLNT. 3 Solcar repeats span residues 130-220, 253-345, and 430-519; these read KENV…CKKH, MTVP…FKII, and VNMI…CKDL. The helical transmembrane segment at 133 to 153 threads the bilayer; sequence VNYLVSGSIAGAISRSATAGF. Topologically, residues 154 to 187 are mitochondrial matrix; sequence ERLTIIQQVQGMSQNLSQGYVGCIAAMKEMVKRE. The helical transmembrane segment at 188–208 threads the bilayer; sequence GFKSIWKGNGANIVKVSPNSG. Residues 209–258 lie on the Mitochondrial intermembrane side of the membrane; it reads IRFLTYEFCKKHFLDNSSNHPSSSSIENGIDGNGVGCGSGSEMKMTVPQT. The helical transmembrane segment at 259–279 threads the bilayer; it reads MFSGAMAGLTSTFFTYPLDVV. The Mitochondrial matrix segment spans residues 280–324; it reads RIRLSLQGSCSNDYAAHRYNGITHSFFKIHKDEGVKGLYKGLGTS. The chain crosses the membrane as a helical span at residues 325–345; sequence IASIVPWVSISFATYEGFKII. The Mitochondrial intermembrane portion of the chain corresponds to 346–435; sequence CKKMILNYQI…LKKGVNMICD (90 aa). Residues 436 to 456 traverse the membrane as a helical segment; the sequence is FVCGALSGAVTMTVCYPLDVL. Topologically, residues 457–487 are mitochondrial matrix; that stretch reads RRRMMIQGIGGNKVLYKNGWDATKKILSNEG. Residues 488–508 traverse the membrane as a helical segment; that stretch reads LVAFYHGIIPAYFKVVPTVAI. Residues 509-527 lie on the Mitochondrial intermembrane side of the membrane; it reads SFAVYEICKDLGSNKYQQK.

The protein belongs to the mitochondrial carrier (TC 2.A.29) family.

It localises to the mitochondrion inner membrane. Functionally, mitochondrial solute carriers shuttle metabolites, nucleotides, and cofactors through the mitochondrial inner membrane. The chain is Mitochondrial substrate carrier family protein V (mcfV) from Dictyostelium discoideum (Social amoeba).